The primary structure comprises 115 residues: Replication initiation control protein YabA (115 aa).

Residues histidine 90, cysteine 92, cysteine 106, and cysteine 109 each contribute to the Zn(2+) site.

It belongs to the YabA family. Homotetramer. Interacts with both DnaA and DnaN, acting as a bridge between these two proteins. Zn(2+) is required as a cofactor.

Its subcellular location is the cytoplasm. It localises to the nucleoid. Its function is as follows. Involved in control of chromosome replication initiation. Inhibits the cooperative binding of DnaA to the oriC region, thus negatively regulating initiation of chromosome replication. Inhibits the ability of DnaA-ATP to form a helix on DNA; does not disassemble preformed DnaA-DNA helices. Decreases the residence time of DnaA on the chromosome at its binding sites (oriC, replication forks and promoter-binding sites). Tethers DnaA to the replication machinery via the DNA polymerase beta sliding clamp subunit (dnaN). Associates with oriC and other DnaA targets on the chromosome in a DnaA-dependent manner. The protein is Replication initiation control protein YabA of Staphylococcus aureus (strain JH1).